A 191-amino-acid polypeptide reads, in one-letter code: UPF0312 protein Sden_2128 (191 aa).

Residues 1–22 (MKKHLLASLLGASLLLPTAVNA) form the signal peptide.

This sequence belongs to the UPF0312 family. Type 1 subfamily.

It is found in the periplasm. This Shewanella denitrificans (strain OS217 / ATCC BAA-1090 / DSM 15013) protein is UPF0312 protein Sden_2128.